Reading from the N-terminus, the 287-residue chain is MSIVNLSSYQFATIEDTAAWRPFVTERCNALGLKGTVLLAPEGINLFVAGTRENTDAFIHYIRHDALFEGKFADLQFKESLSDKQPFTRMLVKLKREIITMKKPAIRPELGRAPFVDAPTLKSWLDRGHDDEGRPVVMLDTRNAFEVDVGTFDNALDYRITKFSEFPEVIEQNRADLEGKTIVSFCTGGIRCEKAAIHMKDVGIENVYQLEGGILKYFEEVGGAHYHGDCFVFDYRTALNPQLEPSKTTQCFGCRAVVTPEAQQSPLYVAGKTCPECHPDSKAARAA.

Residues 132-226 (EGRPVVMLDT…YFEEVGGAHY (95 aa)) form the Rhodanese domain. C186 acts as the Cysteine persulfide intermediate in catalysis.

This sequence belongs to the TrhO family.

It catalyses the reaction uridine(34) in tRNA + AH2 + O2 = 5-hydroxyuridine(34) in tRNA + A + H2O. Functionally, catalyzes oxygen-dependent 5-hydroxyuridine (ho5U) modification at position 34 in tRNAs. This chain is tRNA uridine(34) hydroxylase, found in Paraburkholderia xenovorans (strain LB400).